Reading from the N-terminus, the 686-residue chain is MQLGEQLLVSSVNLPGAHFYPLESARGGSGGSAGHLPSAAPSPQKLDLDKASKKFSGSLSCEAVSGEPAAASAGAPAAMLSDTDAGDAFASAAAVAKPGPPDGRKGSPCGEEELPSAAAAAAAAAAAAAATARYSMDSLSSERYYLQSPGPQGSELAAPCSLFPYQAAAGAPHGPVYPAPNGARYPYGSMLPPGGFPAAVCPPGRAQFGPGAGAGSGAGGSSGGGGGPGTYQYSQGAPLYGPYPGAAAAGSCGGLGGLGVPGSGFRAHVYLCNRPLWLKFHRHQTEMIITKQGRRMFPFLSFNINGLNPTAHYNVFVEVVLADPNHWRFQGGKWVTCGKADNNMQGNKMYVHPESPNTGSHWMRQEISFGKLKLTNNKGANNNNTQMIVLQSLHKYQPRLHIVEVTEDGVEDLNEPSKTQTFTFSETQFIAVTAYQNTDITQLKIDHNPFAKGFRDNYDSSHQIVPGGRYGVQSFFPEPFVNTLPQARYYNGERTVPQTNGLLSPQQSEEVANPPQRWLVTPVQQPGTNKLDISSYESEYTSSTLLPYGIKSLPLQTSHALGYYPDPTFPAMAGWGGRGSYQRKMAAGLPWTSRTSPTVFSEDQLSKEKVKEEIGSSWIETPPSIKSLDSNDSGVYTSACKRRRLSPSNSSNENSPSIKCEDINAEEYSKDTSKGMGGYYAFYTTP.

The tract at residues 27 to 46 (GGSGGSAGHLPSAAPSPQKL) is disordered. Low complexity predominate over residues 34–43 (GHLPSAAPSP). At S107 the chain carries Phosphoserine. The segment at residues 276 to 456 (LWLKFHRHQT…HNPFAKGFRD (181 aa)) is a DNA-binding region (T-box). The segment at 571–686 (AMAGWGGRGS…GGYYAFYTTP (116 aa)) is required for transcription activation. A disordered region spans residues 639 to 686 (ACKRRRLSPSNSSNENSPSIKCEDINAEEYSKDTSKGMGGYYAFYTTP). The segment covering 646–657 (SPSNSSNENSPS) has biased composition (low complexity). Residues 659 to 673 (KCEDINAEEYSKDTS) show a composition bias toward basic and acidic residues.

Expressed in CD8+ T-cells.

It localises to the nucleus. Functions as a transcriptional activator playing a crucial role during development. Functions in trophoblast differentiation and later in gastrulation, regulating both mesoderm delamination and endoderm specification. Plays a role in brain development being required for the specification and the proliferation of the intermediate progenitor cells and their progeny in the cerebral cortex. Required for differentiation and migration of unipolar dendritic brush cells. Also involved in the differentiation of CD8+ T-cells during immune response regulating the expression of lytic effector genes. The protein is Eomesodermin homolog (EOMES) of Homo sapiens (Human).